The primary structure comprises 396 residues: Protein GTS1 (396 aa).

In terms of domain architecture, Arf-GAP spans 14-141; that stretch reads DRELKELINS…FRYDEIKPED (128 aa). A C4-type zinc finger spans residues 30-53; sequence CGECGNFYPTWCSVNLGVFLCGRC. Positions 148 to 161 are enriched in basic and acidic residues; it reads DFDGESDRFDERNR. 2 disordered regions span residues 148 to 194 and 233 to 266; these read DFDG…SGSR and KSSS…QPAI. Residue Ser-153 is modified to Phosphoserine. Phosphotyrosine is present on Tyr-181. Phosphoserine occurs at positions 184 and 187. In terms of domain architecture, UBA spans 193 to 234; sequence SRYSRQLAELKDMGFGDTNKNLDALSSAHGNINRAIDYLEKS. Over residues 234–249 the composition is skewed to low complexity; that stretch reads SSSSRNSVSAAATTST. Phosphoserine is present on Ser-240. The residue at position 249 (Thr-249) is a Phosphothreonine.

The protein resides in the nucleus. Functionally, appears to modulate the timing of budding to obtain an appropriate cell size independent of the DNA replication cycle. Transcription factor involved in both heat resistance and flocculation. This chain is Protein GTS1 (GTS1), found in Saccharomyces cerevisiae (strain ATCC 204508 / S288c) (Baker's yeast).